The chain runs to 153 residues: Endoribonuclease YbeY (153 aa).

Positions 113, 117, and 123 each coordinate Zn(2+).

It belongs to the endoribonuclease YbeY family. Requires Zn(2+) as cofactor.

It localises to the cytoplasm. Functionally, single strand-specific metallo-endoribonuclease involved in late-stage 70S ribosome quality control and in maturation of the 3' terminus of the 16S rRNA. The chain is Endoribonuclease YbeY from Aliivibrio fischeri (strain MJ11) (Vibrio fischeri).